The following is a 340-amino-acid chain: Protein SSUH2 homolog (340 aa).

Positions 1-11 (MDRDPSEEDSM) are enriched in acidic residues. The disordered stretch occupies residues 1 to 20 (MDRDPSEEDSMADLSFEAES).

In terms of tissue distribution, widely expressed, with highest levels in the liver, intestine, tongue and underjaw.

It is found in the cytoplasm. It localises to the nucleus. Plays a role in odontogenesis. In Mus musculus (Mouse), this protein is Protein SSUH2 homolog.